Reading from the N-terminus, the 37-residue chain is Large ribosomal subunit protein bL36A (37 aa).

The protein belongs to the bacterial ribosomal protein bL36 family.

This chain is Large ribosomal subunit protein bL36A, found in Actinobacillus pleuropneumoniae serotype 5b (strain L20).